Reading from the N-terminus, the 363-residue chain is Phosphoserine aminotransferase (363 aa).

Arg-41 contributes to the L-glutamate binding site. Residues 75-76 (AS), Trp-100, Thr-155, Asp-175, and Gln-198 each bind pyridoxal 5'-phosphate. Lys-199 is subject to N6-(pyridoxal phosphate)lysine. Residue 239–240 (NT) coordinates pyridoxal 5'-phosphate.

Belongs to the class-V pyridoxal-phosphate-dependent aminotransferase family. SerC subfamily. As to quaternary structure, homodimer. It depends on pyridoxal 5'-phosphate as a cofactor.

Its subcellular location is the cytoplasm. The catalysed reaction is O-phospho-L-serine + 2-oxoglutarate = 3-phosphooxypyruvate + L-glutamate. The enzyme catalyses 4-(phosphooxy)-L-threonine + 2-oxoglutarate = (R)-3-hydroxy-2-oxo-4-phosphooxybutanoate + L-glutamate. It functions in the pathway amino-acid biosynthesis; L-serine biosynthesis; L-serine from 3-phospho-D-glycerate: step 2/3. In terms of biological role, catalyzes the reversible conversion of 3-phosphohydroxypyruvate to phosphoserine and of 3-hydroxy-2-oxo-4-phosphonooxybutanoate to phosphohydroxythreonine. This Streptococcus suis (strain 98HAH33) protein is Phosphoserine aminotransferase.